Consider the following 2711-residue polypeptide: Chromodomain-helicase-DNA-binding protein 6 (2711 aa).

Composition is skewed to basic and acidic residues over residues 1 to 12 (MKMKIQKKEKQL), 100 to 115 (EPGEQEGTKGSKDREP), 122 to 151 (EPKEPKEPRRAKEPKRAKEPKETKQKDGVK), and 158 to 171 (EASGTKEGKEKRSC). 2 disordered regions span residues 1–52 (MKMK…EEAA) and 66–243 (EEAD…QVKR). The segment at 1-746 (MKMKIQKKEK…MMELRKCCNH (746 aa)) is required for DNA-dependent ATPase activity. The segment covering 214-224 (SLPNPSLQSPE) has biased composition (low complexity). Chromo domains are found at residues 291-342 (NIIE…KDPR) and 374-438 (IEID…KHVE). Residues 472-646 (LFNWYNRKNC…FSLLNFLEPS (175 aa)) enclose the Helicase ATP-binding domain. 485–492 (DEMGLGKT) is an ATP binding site. A DEAH box motif is present at residues 597-600 (DEAH). One can recognise a Helicase C-terminal domain in the interval 786–955 (LIDKLLPKLI…LSKMEVEDLL (170 aa)). The interval 1318-1389 (SLSAEQGVTD…SDPDKSPWPV (72 aa)) is disordered. Positions 1320 to 1329 (SAEQGVTDGT) are enriched in polar residues. A compositionally biased stretch (basic and acidic residues) spans 1332-1350 (IPERGNIDKEDSAEDKLDG). Residues 1448–1502 (RWTRREQADFYRTVSSFGVVYDQEKKAFDWTQFRIISRLDKKSDESLEHYFYSFV) enclose the Myb-like domain. Ser1865 bears the Phosphoserine mark. 7 disordered regions span residues 1951-1978 (SEDSEVEKPKAYQPDLYRSKANNSTVEG), 1997-2059 (EPWK…ASGI), 2124-2147 (LPTPVLSSSAGSRSSLSEPEATEH), 2321-2350 (TTLSTTHPEVPGATSSAPEPTAAASSQAEK), 2373-2419 (GFGT…RGFL), 2550-2602 (SASL…ITTS), and 2641-2711 (RHSE…EDTN). The span at 2017 to 2036 (SEPKPEDMDFENKDDYEKDG) shows a compositional bias: basic and acidic residues. Composition is skewed to low complexity over residues 2130–2140 (SSSAGSRSSLS) and 2333–2349 (ATSSAPEPTAAASSQAE). Low complexity predominate over residues 2550–2563 (SASLASTKSGTSAT). Positions 2565–2586 (KSTEDKLSGHDVNTDALVDDKP) are enriched in basic and acidic residues. Polar residues-rich tracts occupy residues 2591–2602 (FSDQSEPTITTS) and 2677–2688 (SDQNCTESSATV). The segment covering 2690–2711 (PEREHVAQAREEGLKDSNEDTN) has biased composition (basic and acidic residues).

This sequence belongs to the SNF2/RAD54 helicase family. In terms of assembly, interacts with NFE2L2; involved in activation of the transcription. Widely expressed.

The protein localises to the nucleus. It localises to the nucleoplasm. It carries out the reaction ATP + H2O = ADP + phosphate + H(+). Its function is as follows. ATP-dependent chromatin-remodeling factor. Regulates transcription by disrupting nucleosomes in a largely non-sliding manner which strongly increases the accessibility of chromatin. Activates transcription of specific genes in response to oxidative stress through interaction with NFE2L2. The polypeptide is Chromodomain-helicase-DNA-binding protein 6 (Chd6) (Mus musculus (Mouse)).